The chain runs to 296 residues: Ribosomal RNA small subunit methyltransferase H (296 aa).

S-adenosyl-L-methionine is bound by residues 38–40 (GVH), Glu-57, Phe-80, Asp-103, and His-110.

Belongs to the methyltransferase superfamily. RsmH family.

Its subcellular location is the cytoplasm. The enzyme catalyses cytidine(1402) in 16S rRNA + S-adenosyl-L-methionine = N(4)-methylcytidine(1402) in 16S rRNA + S-adenosyl-L-homocysteine + H(+). Its function is as follows. Specifically methylates the N4 position of cytidine in position 1402 (C1402) of 16S rRNA. This chain is Ribosomal RNA small subunit methyltransferase H, found in Borreliella burgdorferi (strain ATCC 35210 / DSM 4680 / CIP 102532 / B31) (Borrelia burgdorferi).